Here is a 653-residue protein sequence, read N- to C-terminus: Biotin biosynthesis bifunctional protein BioWF (653 aa).

Position 278 (Arg-278) interacts with substrate. 365–366 is a binding site for pyridoxal 5'-phosphate; the sequence is GY. Residue His-390 participates in substrate binding. Residues Ser-436, 461 to 464, and 492 to 495 contribute to the pyridoxal 5'-phosphate site; these read DDAH and TASK. An N6-(pyridoxal phosphate)lysine modification is found at Lys-495.

It in the N-terminal section; belongs to the BioW family. The protein in the C-terminal section; belongs to the class-II pyridoxal-phosphate-dependent aminotransferase family. BioF subfamily. As to quaternary structure, homodimer. Requires Mg(2+) as cofactor. It depends on pyridoxal 5'-phosphate as a cofactor.

The catalysed reaction is heptanedioate + ATP + CoA = 6-carboxyhexanoyl-CoA + AMP + diphosphate. It catalyses the reaction 6-carboxyhexanoyl-[ACP] + L-alanine + H(+) = (8S)-8-amino-7-oxononanoate + holo-[ACP] + CO2. It functions in the pathway metabolic intermediate metabolism; pimeloyl-CoA biosynthesis; pimeloyl-CoA from pimelate: step 1/1. It participates in cofactor biosynthesis; biotin biosynthesis. Catalyzes both the decarboxylative condensation of pimeloyl-[acyl-carrier protein] and L-alanine to produce 8-amino-7-oxononanoate (AON), [acyl-carrier protein], and carbon dioxide, and the transformation of pimelate into pimeloyl-CoA with concomitant hydrolysis of ATP to AMP. This Cutibacterium acnes (strain DSM 16379 / KPA171202) (Propionibacterium acnes) protein is Biotin biosynthesis bifunctional protein BioWF.